A 156-amino-acid chain; its full sequence is MPRKGPAPKRPLVVDPVYGSPLVTQLINKVLVDGKKSTAERIVYGALEGARAKNGADPVATLKKAMDNIKPALEVRSRRVGGATYQVPVEVKPGRSTALALRWLVGFSKARREKTMTERLMNEILDASNGLGGAVKRREDTHKMAEANKAFAHYRW.

It belongs to the universal ribosomal protein uS7 family. Part of the 30S ribosomal subunit. Contacts proteins S9 and S11.

One of the primary rRNA binding proteins, it binds directly to 16S rRNA where it nucleates assembly of the head domain of the 30S subunit. Is located at the subunit interface close to the decoding center, probably blocks exit of the E-site tRNA. The protein is Small ribosomal subunit protein uS7 of Micrococcus luteus (strain ATCC 4698 / DSM 20030 / JCM 1464 / CCM 169 / CCUG 5858 / IAM 1056 / NBRC 3333 / NCIMB 9278 / NCTC 2665 / VKM Ac-2230) (Micrococcus lysodeikticus).